The chain runs to 219 residues: Protein-L-isoaspartate O-methyltransferase 2 (219 aa).

S60 is an active-site residue.

Belongs to the methyltransferase superfamily. L-isoaspartyl/D-aspartyl protein methyltransferase family.

It is found in the cytoplasm. It catalyses the reaction [protein]-L-isoaspartate + S-adenosyl-L-methionine = [protein]-L-isoaspartate alpha-methyl ester + S-adenosyl-L-homocysteine. In terms of biological role, catalyzes the methyl esterification of L-isoaspartyl residues in peptides and proteins that result from spontaneous decomposition of normal L-aspartyl and L-asparaginyl residues. It plays a role in the repair and/or degradation of damaged proteins. The protein is Protein-L-isoaspartate O-methyltransferase 2 (pcm2) of Archaeoglobus fulgidus (strain ATCC 49558 / DSM 4304 / JCM 9628 / NBRC 100126 / VC-16).